The chain runs to 577 residues: Urease subunit alpha (577 aa).

The 442-residue stretch at 136 to 577 (GTVDCHVHLI…LPMTQRYFLF (442 aa)) folds into the Urease domain. Ni(2+) contacts are provided by H141, H143, and K224. K224 carries the post-translational modification N6-carboxylysine. Substrate is bound at residue H226. The Ni(2+) site is built by H253 and H279. The Proton donor role is filled by H327. A Ni(2+)-binding site is contributed by D367.

Belongs to the metallo-dependent hydrolases superfamily. Urease alpha subunit family. Heterotrimer of UreA (gamma), UreB (beta) and UreC (alpha) subunits. Three heterotrimers associate to form the active enzyme. It depends on Ni cation as a cofactor. Carboxylation allows a single lysine to coordinate two nickel ions.

Its subcellular location is the cytoplasm. The catalysed reaction is urea + 2 H2O + H(+) = hydrogencarbonate + 2 NH4(+). It participates in nitrogen metabolism; urea degradation; CO(2) and NH(3) from urea (urease route): step 1/1. The protein is Urease subunit alpha of Mycobacterium bovis (strain ATCC BAA-935 / AF2122/97).